A 72-amino-acid polypeptide reads, in one-letter code: Teretoxin Tan11.1 (72 aa).

The N-terminal stretch at 1–21 is a signal peptide; sequence MLATKMSVTFCFLLMLTTVML. Residues 22–31 constitute a propeptide that is removed on maturation; sequence PTEAKTVAGR.

It belongs to the teretoxin H (TH) superfamily. Contains 4 disulfide bonds. As to expression, expressed by the venom duct.

The protein resides in the secreted. This chain is Teretoxin Tan11.1, found in Terebra anilis (Auger snail).